A 345-amino-acid polypeptide reads, in one-letter code: Probable velvet family sexual development regulator LACBIDRAFT_317102 (345 aa).

2 stretches are compositionally biased toward polar residues: residues 1–13 and 24–38; these read MFTTHPQGRSYRS and EIQNSYDQHANNPPR. Disordered regions lie at residues 1–43, 138–189, and 310–345; these read MFTT…TRRR, ESWT…SPSS, and RKRRKKGEIGSPLDDPKSKRKRTSLGSEDDEASDED. The 245-residue stretch at 62–306 folds into the Velvet domain; it reads GQTIRAELDE…ARWGVRLNIR (245 aa). Low complexity-rich tracts occupy residues 141–158 and 167–184; these read TSRSPTQTSFSSSSPTLS and SSPQTSSPTAAQSQASTP. Positions 336 to 345 are enriched in acidic residues; that stretch reads SEDDEASDED.

The protein belongs to the velvet family.

It localises to the nucleus. In terms of biological role, velvet-domain-containing protein that probably acts as a positive regulator of sexual development. The polypeptide is Probable velvet family sexual development regulator LACBIDRAFT_317102 (Laccaria bicolor (strain S238N-H82 / ATCC MYA-4686) (Bicoloured deceiver)).